Reading from the N-terminus, the 351-residue chain is Large ribosomal subunit protein uL3 (351 aa).

Disordered regions lie at residues 1–31 (MGHR…TPRT) and 246–271 (KGSR…GQLG).

It belongs to the universal ribosomal protein uL3 family. As to quaternary structure, part of the 50S ribosomal subunit. Forms a cluster with proteins L14 and L24e.

One of the primary rRNA binding proteins, it binds directly near the 3'-end of the 23S rRNA, where it nucleates assembly of the 50S subunit. In Saccharolobus solfataricus (strain ATCC 35092 / DSM 1617 / JCM 11322 / P2) (Sulfolobus solfataricus), this protein is Large ribosomal subunit protein uL3.